Reading from the N-terminus, the 198-residue chain is Molybdenum cofactor guanylyltransferase (198 aa).

GTP-binding positions include 14 to 16 (LAG), K27, D73, and D103. D103 is a binding site for Mg(2+).

It belongs to the MobA family. Monomer. Mg(2+) is required as a cofactor.

The protein localises to the cytoplasm. The catalysed reaction is Mo-molybdopterin + GTP + H(+) = Mo-molybdopterin guanine dinucleotide + diphosphate. In terms of biological role, transfers a GMP moiety from GTP to Mo-molybdopterin (Mo-MPT) cofactor (Moco or molybdenum cofactor) to form Mo-molybdopterin guanine dinucleotide (Mo-MGD) cofactor. This is Molybdenum cofactor guanylyltransferase from Pseudomonas aeruginosa (strain ATCC 15692 / DSM 22644 / CIP 104116 / JCM 14847 / LMG 12228 / 1C / PRS 101 / PAO1).